The primary structure comprises 91 residues: Small ribosomal subunit protein uS15 (91 aa).

Belongs to the universal ribosomal protein uS15 family. Part of the 30S ribosomal subunit. Forms a bridge to the 50S subunit in the 70S ribosome, contacting the 23S rRNA.

In terms of biological role, one of the primary rRNA binding proteins, it binds directly to 16S rRNA where it helps nucleate assembly of the platform of the 30S subunit by binding and bridging several RNA helices of the 16S rRNA. Its function is as follows. Forms an intersubunit bridge (bridge B4) with the 23S rRNA of the 50S subunit in the ribosome. The sequence is that of Small ribosomal subunit protein uS15 from Rickettsia felis (strain ATCC VR-1525 / URRWXCal2) (Rickettsia azadi).